The following is a 593-amino-acid chain: Probable metalloprotease ARX1 (593 aa).

The protein belongs to the peptidase M24 family. As to quaternary structure, component of the nucleoplasmic and cytoplasmic pre-60S ribosomal particles. Interacts directly with REI1.

It localises to the cytoplasm. It is found in the nucleus. Functionally, probable metalloprotease involved in proper assembly of pre-ribosomal particles during the biogenesis of the 60S ribosomal subunit. Accompanies the pre-60S particles to the cytoplasm. The sequence is that of Probable metalloprotease ARX1 (ARX1) from Saccharomyces cerevisiae (strain ATCC 204508 / S288c) (Baker's yeast).